A 468-amino-acid polypeptide reads, in one-letter code: MSKTLYDKLWENHVVHQEADGTALLYIDRHLIHEVTSPQAFEGLKLAGRKPWRVSSIVATPDHNTPTDHWEEGIKDPISRQQVETLDANIREVGALAYFPFKDQRMGILHVVGPENGATLPGMTVVCGDSHTSTHGAFACMAHGIGTSEVEHVLATQCLLQKRSKTMLVAVEGKLGKGVTAKDVALAIIGTIGTAGGTGYAIEFGGSAIRGLSMEGRMTLCNMAIEGGARLGFVAVDDTTINYLKGRPFSPTGETWDRAVAYWRTLHSDAGAQFDRVVTLRAEDIRPQVTWGTSPEMVVSVDAVVPDPAKEADPVKREGMERALQYMGLNPNTPINQIAIDKVFIGSCTNSRIEDLREAASVLKGRHVAANVKLALAVPGSGLVKRQAEAEGLDKVFVAAGFEWREPGCSMCLAMNADRLEPGERCASTSNRNFEGRQGPGGRTHLVSPAMAAAAAIAGRFADVRDVL.

[4Fe-4S] cluster contacts are provided by Cys348, Cys409, and Cys412.

This sequence belongs to the aconitase/IPM isomerase family. LeuC type 1 subfamily. In terms of assembly, heterodimer of LeuC and LeuD. It depends on [4Fe-4S] cluster as a cofactor.

It carries out the reaction (2R,3S)-3-isopropylmalate = (2S)-2-isopropylmalate. It functions in the pathway amino-acid biosynthesis; L-leucine biosynthesis; L-leucine from 3-methyl-2-oxobutanoate: step 2/4. Catalyzes the isomerization between 2-isopropylmalate and 3-isopropylmalate, via the formation of 2-isopropylmaleate. The chain is 3-isopropylmalate dehydratase large subunit from Dechloromonas aromatica (strain RCB).